The chain runs to 179 residues: Large ribosomal subunit protein uL5 (179 aa).

Belongs to the universal ribosomal protein uL5 family. As to quaternary structure, part of the 50S ribosomal subunit; part of the 5S rRNA/L5/L18/L25 subcomplex. Contacts the 5S rRNA and the P site tRNA. Forms a bridge to the 30S subunit in the 70S ribosome.

This is one of the proteins that bind and probably mediate the attachment of the 5S RNA into the large ribosomal subunit, where it forms part of the central protuberance. In the 70S ribosome it contacts protein S13 of the 30S subunit (bridge B1b), connecting the 2 subunits; this bridge is implicated in subunit movement. Contacts the P site tRNA; the 5S rRNA and some of its associated proteins might help stabilize positioning of ribosome-bound tRNAs. This chain is Large ribosomal subunit protein uL5, found in Anaplasma marginale (strain Florida).